The sequence spans 333 residues: Casein kinase II subunit alpha-3 (333 aa).

Positions 34-319 (YEVVRKVGRG…AREAMDHPYF (286 aa)) constitute a Protein kinase domain. Residues 40-48 (VGRGKYSEV) and K63 each bind ATP. The Proton acceptor role is filled by D151.

Belongs to the protein kinase superfamily. Ser/Thr protein kinase family. CK2 subfamily. In terms of assembly, heterotetramer of two catalytic alpha subunits and two regulatory beta subunits.

It is found in the nucleus. Its subcellular location is the nucleolus. The protein localises to the cytoplasm. It carries out the reaction L-seryl-[protein] + ATP = O-phospho-L-seryl-[protein] + ADP + H(+). The catalysed reaction is L-threonyl-[protein] + ATP = O-phospho-L-threonyl-[protein] + ADP + H(+). Its function is as follows. Casein kinases are operationally defined by their preferential utilization of acidic proteins such as caseins as substrates. The alpha chain contains the catalytic site. The tetrameric holoenzyme CK2 is composed of two alpha and two beta subunits. Acts as a circadian clock component that maintains the correct period length through phosphorylation of CCA1. This Arabidopsis thaliana (Mouse-ear cress) protein is Casein kinase II subunit alpha-3.